The sequence spans 460 residues: Cysteine--tRNA ligase (460 aa).

Cys-29 lines the Zn(2+) pocket. A 'HIGH' region motif is present at residues 31 to 41; the sequence is ATPQSSPHIGH. Zn(2+) is bound by residues Cys-212, His-237, and Glu-241. The 'KMSKS' region signature appears at 268 to 272; the sequence is KMSKS. Lys-271 contacts ATP.

It belongs to the class-I aminoacyl-tRNA synthetase family. As to quaternary structure, monomer. Zn(2+) is required as a cofactor.

It localises to the cytoplasm. The enzyme catalyses tRNA(Cys) + L-cysteine + ATP = L-cysteinyl-tRNA(Cys) + AMP + diphosphate. The polypeptide is Cysteine--tRNA ligase (Corynebacterium glutamicum (strain ATCC 13032 / DSM 20300 / JCM 1318 / BCRC 11384 / CCUG 27702 / LMG 3730 / NBRC 12168 / NCIMB 10025 / NRRL B-2784 / 534)).